A 281-amino-acid chain; its full sequence is UPF0294 protein VP2298 (281 aa).

Belongs to the UPF0294 family.

The protein resides in the cytoplasm. The chain is UPF0294 protein VP2298 from Vibrio parahaemolyticus serotype O3:K6 (strain RIMD 2210633).